The chain runs to 149 residues: Probable flagellum biosynthesis repressor protein FlbT (149 aa).

This sequence belongs to the FlbT family.

Has a post-transcriptional repressor function in flagellum biogenesis. Associates with the 5'-UTR of fljK mRNA and promotes its degradation. The polypeptide is Probable flagellum biosynthesis repressor protein FlbT (Rhizobium etli (strain ATCC 51251 / DSM 11541 / JCM 21823 / NBRC 15573 / CFN 42)).